The chain runs to 172 residues: Large ribosomal subunit protein uL10 (172 aa).

The protein belongs to the universal ribosomal protein uL10 family. As to quaternary structure, part of the ribosomal stalk of the 50S ribosomal subunit. The N-terminus interacts with L11 and the large rRNA to form the base of the stalk. The C-terminus forms an elongated spine to which L12 dimers bind in a sequential fashion forming a multimeric L10(L12)X complex.

Functionally, forms part of the ribosomal stalk, playing a central role in the interaction of the ribosome with GTP-bound translation factors. The polypeptide is Large ribosomal subunit protein uL10 (Macrococcus caseolyticus (strain JCSC5402) (Macrococcoides caseolyticum)).